The chain runs to 538 residues: Hydroxylamine reductase (538 aa).

[4Fe-4S] cluster contacts are provided by C3, C6, C15, and C21. 8 residues coordinate hybrid [4Fe-2O-2S] cluster: H239, E263, C307, C394, C422, C447, E481, and K483. At C394 the chain carries Cysteine persulfide.

It belongs to the HCP family. [4Fe-4S] cluster is required as a cofactor. Requires hybrid [4Fe-2O-2S] cluster as cofactor.

Its subcellular location is the cytoplasm. It catalyses the reaction A + NH4(+) + H2O = hydroxylamine + AH2 + H(+). Its function is as follows. Catalyzes the reduction of hydroxylamine to form NH(3) and H(2)O. The polypeptide is Hydroxylamine reductase (Solidesulfovibrio magneticus (strain ATCC 700980 / DSM 13731 / RS-1) (Desulfovibrio magneticus)).